We begin with the raw amino-acid sequence, 1581 residues long: MKAQGETEESEKLSKMSSLLERLHAKFNQNRPWSETIKLVRQVMEKRVVMSSGGHQHLVSCLETLQKALKVTSLPAMTDRLESIARQNGLGSHLSASGTECYITSDMFYVEVQLDPAGQLCDVKVAHHGENPVSCLELVQQLREKNFDEFSKHLKGLVNLYNLPGDNKLKTKMYLALQSLEQDLSKMAIMYWKATNAGPLDKILHGSVGYLTPRSGGHLMNLKYYVSPSDLLDDKTASPIILHENNVSRSLGMNASVTIEGTSAMYKLPIAPLIMGSHPVDNKWTPSFSSITSANSVDLPACFFLKFPQPIPVSRAFVQKLQNCTGIPLFETQPTYAPLYELITQFELSKDPDPIPLNHNMRFYAALPGQQHCYFLNKDAPLPDGRSLQGTLISKITFQHPGRVPLILNLIRHQVAYNTLIGSCVKRTILKEDSPGLLQFEVCPLSESRFSVSFQHPVNDSLVCVVMDVQDSTHVSCKLYKGLSDALICTDDFIAKVVQRCMSIPVTMRAIRRKAETIQADTPALSLIAETVEDMVKKNLPPASSPGYGMTTGSNPMSGTTTPTNTFPGGPITTLFNMSMSIKDRHESVGHGEDFSKVSQNPILTSLLQITGNGGSTIGSSPTPPHHTPPPVSSMAGNTKNHPMLMNLLKDNPAQDFSTLYGSSPLERQNSSSGSPRMEICSGSNKTKKKESSRLPPEKPKHQTEDDFQRELFSMDVDSQNPIFDVNMTADTLDTPHITPAPSQCSTPTTYPQPVPHPQPSIQRMVRLSSSDSIGPDVTDILSDIAEEASKLPSTSDDCPAIGTPLRDSSSSGHSQSTLFDSDVFQTNNNENPYTDPADLIADAAGSPSSDSPTNHFFHDGVDFNPDLSNSQSQSGFGEEYFDESSQSGDNDDFKGFASQALNTLGVPMLGGDNGETKFKGNNQADTVDFSIISVAGKALAPADLMEHHSGSQGSLLTTGDLGKEKTQKRVKEGNGTSNSTLSGPGLDSKPGKRSRTPSNDGKSKDKPPKRKKADTEGKSPSHSSSNRPFTPPTSTGGSKSPGSSGRSQTPPGVATPPIPKITIQIPKGTVMVGKPSSHSQYTSSGSVSSSGSKSHHSHSSSSSSSSASTSRKMKSSKSEGSSSSKLSSSMYSSQGSSGSSQSKNSSQSGGKPGSSPITKHGLSSGSSSTKMKPQGKPSSLMNPSLSKPNISPSHSRPPGGSDKLASPMKPVPGTPPSSKAKSPISSGSGGSHMSGTSSSSGMKSSSGLGSSGSLSQKTPPSSNSCTASSSSFSSSGSSMSSSQNQHGSSKGKSPSRNKKPSLTAVIDKLKHGVVTSGPGGEDPLDGQMGVSTNSSSHPMSSKHNMSGGEFQGKREKSDKDKSKVSTSGSSVDSSKKTSESKNVGSTGVAKIIISKHDGGSPSIKAKVTLQKPGESSGEGLRPQMASSKNYGSPLISGSTPKHERGSPSHSKSPAYTPQNLDSESESGSSIAEKSYQNSPSSDDGIRPLPEYSTEKHKKHKKEKKKVKDKDRDRDRDKDRDKKKSHSIKPESWSKSPISSDQSLSMTSNTILSADRPSRLSPDFMIGEEDDDLMDVALIGN.

The interval 1-670 (MKAQGETEES…YGSSPLERQN (670 aa)) is interaction with the Mediator complex and THRA. An interaction with ESR1 region spans residues 16–590 (MSSLLERLHA…SIKDRHESVG (575 aa)). Interaction with the Mediator complex stretches follow at residues 108–212 (FYVE…GYLT) and 215–390 (SGGH…SLQG). Residues 405–644 (PLILNLIRHQ…MAGNTKNHPM (240 aa)) form an interaction with THRA region. The interaction with VDR stretch occupies residues 542–788 (PASSPGYGMT…TDILSDIAEE (247 aa)). S588 bears the Phosphoserine mark. The LXXLL motif 1 motif lies at 604–608 (LTSLL). 4 disordered regions span residues 609-705 (QITG…HQTE), 791-819 (KLPSTSDDCPAIGTPLRDSSSSGHSQSTL), 868-895 (LSNSQSQSGFGEEYFDESSQSGDNDDFK), and 947-1566 (EHHS…DFMI). The segment covering 622–632 (PTPPHHTPPPV) has biased composition (pro residues). The interaction with PPARGC1A and THRA stretch occupies residues 622–701 (PTPPHHTPPP…SSRLPPEKPK (80 aa)). Residues 645 to 649 (LMNLL) carry the LXXLL motif 2 motif. Residues 655–675 (QDFSTLYGSSPLERQNSSSGS) show a composition bias toward polar residues. The interval 656-1065 (DFSTLYGSSP…TPPIPKITIQ (410 aa)) is interaction with ESR1. Position 664 is a phosphoserine (S664). Residues 681–715 (CSGSNKTKKKESSRLPPEKPKHQTEDDFQRELFSM) are interaction with GATA1. Positions 690-705 (KESSRLPPEKPKHQTE) are enriched in basic and acidic residues. S794 carries the post-translational modification Phosphoserine. T804 is modified (phosphothreonine). Residues 807 to 819 (RDSSSSGHSQSTL) show a composition bias toward polar residues. Positions 874 to 901 (QSGFGEEYFDESSQSGDNDDFKGFASQA) match the Integrase domain-binding motif (IBM) motif. Residues S886 and S952 each carry the phosphoserine modification. Over residues 962-973 (LGKEKTQKRVKE) the composition is skewed to basic and acidic residues. T1031 bears the Phosphothreonine; by MAPK1 or MAPK3 mark. The span at 1033–1050 (PTSTGGSKSPGSSGRSQT) shows a compositional bias: low complexity. 2 positions are modified to phosphothreonine: T1050 and T1056. 3 stretches are compositionally biased toward low complexity: residues 1077–1093 (SSHSQYTSSGSVSSSGS), 1100–1111 (SSSSSSSSASTS), and 1119–1156 (SEGSSSSKLSSSMYSSQGSSGSSQSKNSSQSGGKPGSS). A Phosphoserine modification is found at S1156. Positions 1162 to 1195 (GLSSGSSSTKMKPQGKPSSLMNPSLSKPNISPSH) are enriched in polar residues. K1177 carries the post-translational modification N6-acetyllysine. S1207 carries the post-translational modification Phosphoserine. T1215 is subject to Phosphothreonine. 2 stretches are compositionally biased toward low complexity: residues 1218–1227 (SSKAKSPISS) and 1234–1293 (MSGT…SKGK). Position 1223 is a phosphoserine (S1223). The tract at residues 1249–1421 (LGSSGSLSQK…KPGESSGEGL (173 aa)) is interaction with TP53. S1302 carries the post-translational modification Phosphoserine. Polar residues predominate over residues 1330–1345 (GVSTNSSSHPMSSKHN). S1347 carries the phosphoserine modification. Over residues 1352–1364 (QGKREKSDKDKSK) the composition is skewed to basic and acidic residues. S1403 and S1433 each carry phosphoserine. Polar residues-rich tracts occupy residues 1425–1440 (MASSKNYGSPLISGST) and 1448–1482 (PSHSKSPAYTPQNLDSESESGSSIAEKSYQNSPSS). T1440 carries the phosphothreonine modification. T1457 is subject to Phosphothreonine; by MAPK1 or MAPK3. Phosphoserine occurs at positions 1463, 1465, 1479, 1481, and 1482. The segment covering 1496–1505 (KHKKHKKEKK) has biased composition (basic residues). The span at 1506–1522 (KVKDKDRDRDRDKDRDK) shows a compositional bias: basic and acidic residues. K1529 carries the N6-acetyllysine modification. The span at 1533 to 1552 (WSKSPISSDQSLSMTSNTIL) shows a compositional bias: polar residues.

Belongs to the Mediator complex subunit 1 family. In terms of assembly, component of the Mediator complex, which is composed of MED1, MED4, MED6, MED7, MED8, MED9, MED10, MED11, MED12, MED13, MED13L, MED14, MED15, MED16, MED17, MED18, MED19, MED20, MED21, MED22, MED23, MED24, MED25, MED26, MED27, MED29, MED30, MED31, CCNC, CDK8 and CDC2L6/CDK11. The MED12, MED13, CCNC and CDK8 subunits form a distinct module termed the CDK8 module. Mediator containing the CDK8 module is less active than Mediator lacking this module in supporting transcriptional activation. Individual preparations of the Mediator complex lacking one or more distinct subunits have been variously termed ARC, CRSP, DRIP, PC2, SMCC and TRAP. This subunit specifically interacts with a number of nuclear receptors in a ligand-dependent fashion including AR, ESR1, ESR2, PPARA, PPARG, RORA, RXRA, RXRG, THRA, THRB and VDR. Interacts with CTNNB1, GABPA, GLI3, PPARGC1A and TP53. Interacts with GATA1 and YWHAH. Interacts with CLOCK; this interaction requires the presence of THRAP3. Interacts with CCAR1. Interacts with NR4A3. Interacts (via IBM motif) with PSIP1 (via IBD domain); phosphorylation increases its affinity for PSIP1. Interacts with USP22. In terms of processing, phosphorylated by MAPK1 or MAPK3 during G2/M phase which may enhance protein stability and promote entry into the nucleolus. Phosphorylation increases its interaction with PSIP1.

The protein resides in the nucleus. Its function is as follows. Component of the Mediator complex, a coactivator involved in the regulated transcription of nearly all RNA polymerase II-dependent genes. Mediator functions as a bridge to convey information from gene-specific regulatory proteins to the basal RNA polymerase II transcription machinery. Mediator is recruited to promoters by direct interactions with regulatory proteins and serves as a scaffold for the assembly of a functional preinitiation complex with RNA polymerase II and the general transcription factors. Acts as a coactivator for GATA1-mediated transcriptional activation during erythroid differentiation of K562 erythroleukemia cells. This is Mediator of RNA polymerase II transcription subunit 1 (MED1) from Pongo abelii (Sumatran orangutan).